An 823-amino-acid chain; its full sequence is Aminopeptidase O (823 aa).

Residue histidine 481 participates in Zn(2+) binding. Glutamate 482 acts as the Proton acceptor in catalysis. Zn(2+) contacts are provided by histidine 485 and glutamate 504. A Nucleolar localization signal motif is present at residues 693-703; the sequence is RRPRKRKRGKR.

Belongs to the peptidase M1 family. Zn(2+) serves as cofactor. Expressed in testis, heart, brain, lung, liver, skeletal muscle, kidney and ovary. Expressed in vascular tissues.

The protein resides in the nucleus. It localises to the nucleolus. Its subcellular location is the cytoplasm. Its function is as follows. Aminopeptidase which catalyzes the hydrolysis of amino acid residues from the N-terminus of peptide or protein substrates. This is Aminopeptidase O (Aopep) from Mus musculus (Mouse).